The primary structure comprises 288 residues: Oxaloacetate decarboxylase (288 aa).

Residue S47 participates in substrate binding. D85 provides a ligand contact to Mg(2+). Substrate is bound by residues R156 and H232.

Belongs to the isocitrate lyase/PEP mutase superfamily. Oxaloacetate decarboxylase family. In terms of assembly, homotetramer; dimer of dimers. It depends on Mg(2+) as a cofactor.

It catalyses the reaction oxaloacetate + H(+) = pyruvate + CO2. Catalyzes the decarboxylation of oxaloacetate into pyruvate. Seems to play a role in maintaining cellular concentrations of bicarbonate and pyruvate. The polypeptide is Oxaloacetate decarboxylase (Rhodopseudomonas palustris (strain ATCC BAA-98 / CGA009)).